The following is a 276-amino-acid chain: MRESLKNSKRLVIKVGTSTLMYGNGHINLRTIEKLAMVLSDLRNEGKEVILVSSGAIGVGCHKLQLPVRPTSIPEQQAVASVGQSELMHIYSKFFGEYGQVVGQVLLTRDVTDFPISRENVMNTLESLLERGIIPIVNENDTVAVEELEHVTKYGDNDLLSAIVAKLVQADLLIMLSDIDGFYGSNPSTDPDAVMFSEINQITPEIEALAGGKGSKFGTGGMLTKLSAASYCMNANQKMILTNGKNPTIIFDIMQGEQIGTLFASKKEEFSHDGTH.

Residue Lys14 coordinates ATP. 3 residues coordinate substrate: Ser54, Asp141, and Asn157. ATP contacts are provided by residues 177-178 (SD) and 219-225 (TGGMLTK).

This sequence belongs to the glutamate 5-kinase family.

It is found in the cytoplasm. It carries out the reaction L-glutamate + ATP = L-glutamyl 5-phosphate + ADP. It participates in amino-acid biosynthesis; L-proline biosynthesis; L-glutamate 5-semialdehyde from L-glutamate: step 1/2. Functionally, catalyzes the transfer of a phosphate group to glutamate to form L-glutamate 5-phosphate. The protein is Glutamate 5-kinase of Listeria monocytogenes serovar 1/2a (strain ATCC BAA-679 / EGD-e).